We begin with the raw amino-acid sequence, 263 residues long: Methylesterase 1 (263 aa).

Catalysis depends on S85, which acts as the Acyl-ester intermediate. Active-site charge relay system residues include D213 and H241.

The protein belongs to the AB hydrolase superfamily. Methylesterase family.

The enzyme catalyses methyl (indol-3-yl)acetate + H2O = (indol-3-yl)acetate + methanol + H(+). It catalyses the reaction methyl (-)-jasmonate + H2O = jasmonate + methanol + H(+). The catalysed reaction is methyl salicylate + H2O = salicylate + methanol + H(+). The protein operates within plant hormone biosynthesis. Its pathway is lipid metabolism; oxylipin biosynthesis. Esterase activity is down-regulated by salicylic acid (SA). In terms of biological role, methylesterase shown to have carboxylesterase activity, methyl indole-3-acetic acid (MeIAA) esterase activity, methyl salicylate (MeSA) esterase activity and methyl jasmonate (MeJA) esterase activity in vitro. Required to convert methyl salicylate (MeSA) to salicylic acid (SA) as part of the signal transduction pathways that activate systemic acquired resistance in systemic tissue. MeSA is believed to be an inactive form that needs to be demethylated to exert a biological effect. In Arabidopsis thaliana (Mouse-ear cress), this protein is Methylesterase 1.